The chain runs to 414 residues: Alanine--glyoxylate aminotransferase (414 aa).

A mitochondrion-targeting transit peptide spans Met1–Met23. At Lys231 the chain carries N6-(pyridoxal phosphate)lysine. N6-acetyllysine; alternate is present on Lys247. Residue Lys247 is modified to N6-succinyllysine; alternate. N6-acetyllysine is present on Lys256. Lys330 carries the N6-acetyllysine; alternate modification. Lys330 carries the N6-succinyllysine; alternate modification. An N6-acetyllysine modification is found at Lys334. A substrate-binding site is contributed by Arg382. The Microbody targeting signal signature appears at Asn412–Leu414.

The protein belongs to the class-V pyridoxal-phosphate-dependent aminotransferase family. Homodimer. It depends on pyridoxal 5'-phosphate as a cofactor.

The protein localises to the peroxisome. It is found in the mitochondrion matrix. The enzyme catalyses L-serine + pyruvate = 3-hydroxypyruvate + L-alanine. The catalysed reaction is glyoxylate + L-alanine = glycine + pyruvate. Functionally, catalyzes the transamination of glyoxylate to glycine and contributes to the glyoxylate detoxification. In terms of biological role, catalyzes the transamination between L-serine and pyruvate and weakly contributes to gluconeogenesis from the L-serine metabolism. The chain is Alanine--glyoxylate aminotransferase from Mus musculus (Mouse).